Here is a 312-residue protein sequence, read N- to C-terminus: DNA-directed RNA polymerase subunit alpha (312 aa).

The interval 1–229 (MLQYQIDRIE…ELFQPLATVT (229 aa)) is alpha N-terminal domain (alpha-NTD). An alpha C-terminal domain (alpha-CTD) region spans residues 246 to 312 (IPLEELNLSV…ISIPQSRTSA (67 aa)).

Belongs to the RNA polymerase alpha chain family. In terms of assembly, in cyanobacteria the RNAP catalytic core is composed of 2 alpha, 1 beta, 1 beta', 1 gamma and 1 omega subunit. When a sigma factor is associated with the core the holoenzyme is formed, which can initiate transcription.

The enzyme catalyses RNA(n) + a ribonucleoside 5'-triphosphate = RNA(n+1) + diphosphate. In terms of biological role, DNA-dependent RNA polymerase catalyzes the transcription of DNA into RNA using the four ribonucleoside triphosphates as substrates. The polypeptide is DNA-directed RNA polymerase subunit alpha (Prochlorococcus marinus (strain SARG / CCMP1375 / SS120)).